The chain runs to 393 residues: Synaptic vesicle membrane protein VAT-1 homolog (393 aa).

The interval 1–40 (MSDEREVAEAATGEDASSPPPKTEAASDPQHPAASEGAAA) is disordered. An N-acetylserine modification is found at S2. Phosphoserine is present on residues S2, S18, S27, S35, and S44.

Belongs to the zinc-containing alcohol dehydrogenase family. Quinone oxidoreductase subfamily. Expressed in brain. Also expressed in glioblastoma cells.

It is found in the cytoplasm. Its subcellular location is the mitochondrion outer membrane. Possesses ATPase activity. Plays a part in calcium-regulated keratinocyte activation in epidermal repair mechanisms. Has no effect on cell proliferation. Negatively regulates mitochondrial fusion in cooperation with mitofusin proteins (MFN1-2). This Homo sapiens (Human) protein is Synaptic vesicle membrane protein VAT-1 homolog (VAT1).